Reading from the N-terminus, the 466-residue chain is Argininosuccinate lyase (466 aa).

The 2-(N(omega)-L-arginino)succinate site is built by Ser-27, Asn-114, and Thr-159. His-160 acts as the Proton acceptor in catalysis. Ser-281 acts as the Proton donor in catalysis. The 2-(N(omega)-L-arginino)succinate site is built by Asn-289, Tyr-321, Gln-326, and Lys-329.

It belongs to the lyase 1 family. Argininosuccinate lyase subfamily. In terms of assembly, homotetramer. In terms of processing, the N-terminus is blocked. In terms of tissue distribution, eye lens.

The catalysed reaction is 2-(N(omega)-L-arginino)succinate = fumarate + L-arginine. It functions in the pathway amino-acid biosynthesis; L-arginine biosynthesis; L-arginine from L-ornithine and carbamoyl phosphate: step 3/3. Functionally, delta crystallin, the principal crystallin in embryonic lens, is found only in birds and reptiles. This protein also functions as an enzymatically active argininosuccinate lyase, but it has a low activity. In Columba livia (Rock dove), this protein is Argininosuccinate lyase (ASL).